The sequence spans 307 residues: Small ribosomal subunit biogenesis GTPase RsgA (307 aa).

Residues 1–20 are disordered; that stretch reads MPSEHPFSDGISTPNPKETM. The span at 10–20 shows a compositional bias: polar residues; it reads GISTPNPKETM. Residues 85–242 form the CP-type G domain; sequence RQDAWKTKLI…LIDSPGLQEF (158 aa). Residues 135–138 and 184–192 each bind GTP; these read NKAD and GQSGMGKST. Residues cysteine 266, cysteine 271, histidine 273, and cysteine 279 each coordinate Zn(2+).

The protein belongs to the TRAFAC class YlqF/YawG GTPase family. RsgA subfamily. As to quaternary structure, monomer. Associates with 30S ribosomal subunit, binds 16S rRNA. It depends on Zn(2+) as a cofactor.

It is found in the cytoplasm. Its function is as follows. One of several proteins that assist in the late maturation steps of the functional core of the 30S ribosomal subunit. Helps release RbfA from mature subunits. May play a role in the assembly of ribosomal proteins into the subunit. Circularly permuted GTPase that catalyzes slow GTP hydrolysis, GTPase activity is stimulated by the 30S ribosomal subunit. This Neisseria meningitidis serogroup C / serotype 2a (strain ATCC 700532 / DSM 15464 / FAM18) protein is Small ribosomal subunit biogenesis GTPase RsgA.